We begin with the raw amino-acid sequence, 838 residues long: Protein kintoun (838 aa).

Disordered regions lie at residues 106-125, 212-238, 370-411, 557-696, and 776-838; these read RPKN…LNWS, NPTA…GKPE, LRHF…TSSP, NAPL…DSCS, and QQRR…EMDD. The span at 114-125 shows a compositional bias: polar residues; the sequence is DPSSGSRGLNWS. The segment covering 370–380 has biased composition (basic and acidic residues); it reads LRHFSREDSGV. Ser378 bears the Phosphoserine mark. A compositionally biased stretch (acidic residues) spans 389 to 398; it reads PVEEDPDGEL. The segment covering 557 to 572 has biased composition (basic and acidic residues); it reads NAPLDVEFERNQEGHA. Residues 583-592 show a composition bias toward acidic residues; sequence EEEEEEEDKE. Low complexity predominate over residues 601–611; the sequence is DQQQQQQVQNK. Basic residues-rich tracts occupy residues 612-623 and 673-683; these read KSGKKQRKRNKK and RSHRGILKRFS. Ser781 carries the post-translational modification Phosphoserine. The span at 789–802 shows a compositional bias: basic and acidic residues; that stretch reads EETRGSALKQKENP.

Belongs to the PIH1 family. Kintoun subfamily. Interacts with Pp1alpha-96A, Pp1-87B, Pp1-13C and flw.

It is found in the cytoplasm. In terms of biological role, required for cytoplasmic pre-assembly of axonemal dyneins, thereby playing a central role in motility in cilia and flagella. Involved in pre-assembly of dynein arm complexes in the cytoplasm before intraflagellar transport loads them for the ciliary compartment. The polypeptide is Protein kintoun (Drosophila sechellia (Fruit fly)).